Here is a 611-residue protein sequence, read N- to C-terminus: MNNKEMKARQEKIRNFSIIAHIDHGKSTLADRILEKTNTVSSREMQDQLLDSMDLERERGITIKLNAIELNYTAKDGEIYTFHLIDTPGHVDFTYEVSRSLAACEGAVLVVDAAQGIEAQTLANVYLALDNDLEILPVINKIDLPAADPERVRTEIEDVIGIDASEAVLASAKAGIGIEDILEQVVEYVPAPSGDIEAPLKALIFDSIYDSYRGVVLNIRVIDGVVRPGDKIQMMSNGKTFDVTEVGVFSPKPIARDYLMVGDVGYITASIKTVQDTRVGDTVTLADNPAAEALPGYRKMNPMVYCGLYPIDTSRYNDLREALEKLQLNDAALQFEPETSQALGFGFRCGFLGLLHMDVVQERLEREFNLELITTAPSVIYHVNKTDGTTVVVDNPAEFPEPVTIESVEEPYVKAQIMVPNDYVGAVMELSQRKRGEFITMDYLDDYRVNVVYEIPLSEIVFDFFDKLKSSTKGYASLDYEMAGYRTSRLVKMDILLNAEKVDALSFIVHRDFAFERGKAIVEKLKKLIPRQQFEVPVQAAIGQKIVARSDIKALRKNVLAKCYGGDVSRKRKLLEKQKEGKKRMKQIGSVEVPQEAFMAVLKMDDQDNAK.

The region spanning 11–193 (EKIRNFSIIA…QVVEYVPAPS (183 aa)) is the tr-type G domain. Residues 23–28 (DHGKST) and 140–143 (NKID) each bind GTP.

The protein belongs to the TRAFAC class translation factor GTPase superfamily. Classic translation factor GTPase family. LepA subfamily.

It is found in the cell membrane. It catalyses the reaction GTP + H2O = GDP + phosphate + H(+). In terms of biological role, required for accurate and efficient protein synthesis under certain stress conditions. May act as a fidelity factor of the translation reaction, by catalyzing a one-codon backward translocation of tRNAs on improperly translocated ribosomes. Back-translocation proceeds from a post-translocation (POST) complex to a pre-translocation (PRE) complex, thus giving elongation factor G a second chance to translocate the tRNAs correctly. Binds to ribosomes in a GTP-dependent manner. This Enterococcus faecalis (strain ATCC 700802 / V583) protein is Elongation factor 4.